The primary structure comprises 402 residues: Multidrug resistance protein MdtH (402 aa).

The Cytoplasmic segment spans residues 1–12 (MSRVSQARNLGK). A helical transmembrane segment spans residues 13 to 33 (YFLLIDNMLVVLGFFVVFPLI). Over 34–98 (SIRFVDQMGW…GFATMGIAHE (65 aa)) the chain is Periplasmic. Residues 99 to 116 (PWLLWFSCLLSGLGGTLF) form a helical membrane-spanning segment. Topologically, residues 117–138 (DPPRSALVVKLIRPQQRGRFFS) are cytoplasmic. Residues 139 to 159 (LLMMQDSASAVIGALLGSWLL) traverse the membrane as a helical segment. At 160-164 (QYDFR) the chain is on the periplasmic side. The helical transmembrane segment at 165 to 185 (LVCATGPVLFVLCAAFNAWLL) threads the bilayer. Residues 186–213 (PAWKLSTVRTPVREGMTRVMRDKRFVTY) are Cytoplasmic-facing. The helical transmembrane segment at 214-234 (VLTLAGYYMLAVQVMLMLPIM) threads the bilayer. Topologically, residues 235–243 (VNDVAGAPS) are periplasmic. The helical transmembrane segment at 244–264 (AVKWMYAIEACLSLTLLYPIA) threads the bilayer. Over 265-276 (RWSEKHFRLEHR) the chain is Cytoplasmic. The chain crosses the membrane as a helical span at residues 277–297 (LMAGLLIMSLSMMPVGMVSGL). The Periplasmic portion of the chain corresponds to 298 to 299 (QQ). The chain crosses the membrane as a helical span at residues 300 to 320 (LFTLICLFYIGSIIAEPARET). Residues 321–339 (LSASLADARARGSYMGFSR) lie on the Cytoplasmic side of the membrane. A helical transmembrane segment spans residues 340–360 (LGLAIGGAIGYIGGGWLFDLG). The Periplasmic segment spans residues 361–367 (KSAHQPE). Residues 368-388 (LPWMMLGIIGIFTFLALGWQF) traverse the membrane as a helical segment. The Cytoplasmic portion of the chain corresponds to 389–402 (SQKRAARRLLERDA).

Belongs to the major facilitator superfamily. DHA1 family. MdtH (TC 2.A.1.2.21) subfamily.

It is found in the cell inner membrane. The sequence is that of Multidrug resistance protein MdtH from Shigella flexneri serotype 5b (strain 8401).